The following is a 581-amino-acid chain: Peptidyl-prolyl cis-trans isomerase FKBP10 (581 aa).

The first 33 residues, 1 to 33 (MFLVGSSSHTLHRLRILPLLLLLQTLERGLGRA), serve as a signal peptide directing secretion. 3 consecutive PPIase FKBP-type domains span residues 61–149 (GDFV…LDVW), 173–261 (SDFV…LDVH), and 285–373 (GDFM…IDFH). 7 N-linked (GlcNAc...) asparagine glycosylation sites follow: Asn-69, Asn-181, Asn-293, Asn-309, Asn-351, Asn-392, and Asn-406. One can recognise a PPIase FKBP-type 4 domain in the interval 398 to 485 (GDFIRYHYNC…LFEVELVSRE (88 aa)). EF-hand domains lie at 496–531 (WYQD…QVNE) and 541–576 (DPDK…DQER). 10 residues coordinate Ca(2+): Asp-509, Asn-511, Asp-513, Glu-515, Glu-520, Asp-554, Asn-556, Asp-558, Lys-560, and Glu-565. The disordered stretch occupies residues 533 to 581 (KGRLMPGQDPDKTISDMFQNQDRNQDGKITAEELKLKSDEDQERVHEEL). Residues 555–581 (RNQDGKITAEELKLKSDEDQERVHEEL) show a composition bias toward basic and acidic residues. Positions 578 to 581 (HEEL) match the Prevents secretion from ER motif.

Post-translationally, N-glycosylated. In terms of processing, phosphorylated. Expressed in aorta, brain, heart, kidney, lung, spleen and testis. Not detected in liver.

It localises to the endoplasmic reticulum lumen. It carries out the reaction [protein]-peptidylproline (omega=180) = [protein]-peptidylproline (omega=0). Inhibited by both FK506 and rapamycin, but not by cyclosporin A. Functionally, PPIases accelerate the folding of proteins during protein synthesis. This is Peptidyl-prolyl cis-trans isomerase FKBP10 (Fkbp10) from Mus musculus (Mouse).